The following is a 126-amino-acid chain: Probable 4-amino-4-deoxy-L-arabinose-phosphoundecaprenol flippase subunit ArnF (126 aa).

The chain crosses the membrane as a helical span at residues 1–21 (MGFLWALFSVGLVSAAQLLLR). Topologically, residues 22-47 (SAMVALPPLTDIVAFLQHLLHFQPGT) are periplasmic. The chain crosses the membrane as a helical span at residues 48 to 68 (VGLFFGLLGYLLSMVCWYFAL). At 69–76 (HRLPLSKA) the chain is on the cytoplasmic side. A helical transmembrane segment spans residues 77–97 (YALLSLSYILVWAAAIWLPGW). Residues 98–100 (HEP) lie on the Periplasmic side of the membrane. The helical transmembrane segment at 101–121 (FYWQSLLGVTIIVAGVLTIFW) threads the bilayer. At 122–126 (PVKRR) the chain is on the cytoplasmic side.

It belongs to the ArnF family. In terms of assembly, heterodimer of ArnE and ArnF.

Its subcellular location is the cell inner membrane. It participates in bacterial outer membrane biogenesis; lipopolysaccharide biosynthesis. In terms of biological role, translocates 4-amino-4-deoxy-L-arabinose-phosphoundecaprenol (alpha-L-Ara4N-phosphoundecaprenol) from the cytoplasmic to the periplasmic side of the inner membrane. The sequence is that of Probable 4-amino-4-deoxy-L-arabinose-phosphoundecaprenol flippase subunit ArnF from Klebsiella pneumoniae (strain 342).